A 184-amino-acid chain; its full sequence is Peptidyl-tRNA hydrolase (184 aa).

Tyrosine 14 lines the tRNA pocket. Residue histidine 19 is the Proton acceptor of the active site. Phenylalanine 60 and asparagine 62 together coordinate tRNA.

Belongs to the PTH family. As to quaternary structure, monomer.

The protein resides in the cytoplasm. The catalysed reaction is an N-acyl-L-alpha-aminoacyl-tRNA + H2O = an N-acyl-L-amino acid + a tRNA + H(+). Its function is as follows. Hydrolyzes ribosome-free peptidyl-tRNAs (with 1 or more amino acids incorporated), which drop off the ribosome during protein synthesis, or as a result of ribosome stalling. In terms of biological role, catalyzes the release of premature peptidyl moieties from peptidyl-tRNA molecules trapped in stalled 50S ribosomal subunits, and thus maintains levels of free tRNAs and 50S ribosomes. The chain is Peptidyl-tRNA hydrolase from Mesomycoplasma hyopneumoniae (strain 7448) (Mycoplasma hyopneumoniae).